The primary structure comprises 77 residues: Delta/omega-plectoxin-Pt1a (77 aa).

An N-terminal signal peptide occupies residues 1–20 (MKHLIVAVVLLSALAICTSA). A propeptide spanning residues 21–34 (EEEQVNVPFRPEER) is cleaved from the precursor. Intrachain disulfides connect Cys38–Cys51, Cys45–Cys57, Cys50–Cys67, Cys54–Cys74, and Cys59–Cys65. Residue Ser73 is the site of O-palmitoyl serine attachment. Cys74 is subject to Cysteine amide.

It belongs to the neurotoxin 02 (plectoxin) family. 01 (Tx3) subfamily. In terms of tissue distribution, expressed by the venom gland.

The protein resides in the secreted. Excitatory toxin that acts on both calcium and sodium (Nav) channels. It preferentially blocks a subset of calcium channels that is apparently not required for neurotransmitter release, it decreases threshold for sodium channel activation and it slows sodium channel inactivation. As it enhances synaptic transmission by prolonging presynaptic release of neurotransmitter, its effects on sodium and calcium channels may act synergistically to sustain the terminal excitability. The chain is Delta/omega-plectoxin-Pt1a from Plectreurys tristis (Spider).